A 1124-amino-acid chain; its full sequence is Eukaryotic translation initiation factor 3 subunit A (1124 aa).

Positions 96–124 form a coiled coil; that stretch reads LKMAEERTEQAQQQSSQATVDIDDLDNLA. The region spanning 317–498 is the PCI domain; the sequence is IQRMTTHVLI…ECVHFGTDLS (182 aa). Composition is skewed to basic and acidic residues over residues 812–851 and 860–883; these read EERR…RQLA and EVER…ERRP. A disordered region spans residues 812–1124; it reads EERRRIEEEL…EEGWTDVKHR (313 aa). Low complexity predominate over residues 900-910; the sequence is PAAAAPANPAA. 4 stretches are compositionally biased toward basic and acidic residues: residues 928–952, 960–990, 1007–1048, and 1063–1100; these read PRER…EKDG, RGGD…DRGP, PRRD…RGGG, and DDNR…EARP.

It belongs to the eIF-3 subunit A family. Component of the eukaryotic translation initiation factor 3 (eIF-3) complex.

Its subcellular location is the cytoplasm. In terms of biological role, RNA-binding component of the eukaryotic translation initiation factor 3 (eIF-3) complex, which is involved in protein synthesis of a specialized repertoire of mRNAs and, together with other initiation factors, stimulates binding of mRNA and methionyl-tRNAi to the 40S ribosome. The eIF-3 complex specifically targets and initiates translation of a subset of mRNAs involved in cell proliferation. The sequence is that of Eukaryotic translation initiation factor 3 subunit A from Anopheles gambiae (African malaria mosquito).